The following is a 280-amino-acid chain: Probable aquaporin PIP2-8 (280 aa).

The disordered stretch occupies residues 1–21; sequence MAAGSGSGSNPKDYQDPPPAP. The next 2 membrane-spanning stretches (helical) occupy residues 36-56 and 70-92; these read AAIAEFTATLLLVCISVSTVI and LGIAWAFGGLIFVLVYCTAGISG. The NPA 1 motif lies at 96–98; it reads NPA. A run of 3 helical transmembrane segments spans residues 113 to 135, 156 to 176, and 192 to 212; these read RAALYTMAQCVGAVCGAGLARAM, SAGAGVVAEMVGTFVLVYTVF, and VLAPLPIGLAVLVVHLATIPI. Residues 218–220 carry the NPA 2 motif; the sequence is NPA. Residues 236–256 traverse the membrane as a helical segment; that stretch reads AWSHLWIFWVGPFAGAAAAMI.

The protein belongs to the MIP/aquaporin (TC 1.A.8) family. PIP (TC 1.A.8.11) subfamily. As to expression, expressed in leaves and at lower levels in roots.

It localises to the cell membrane. Aquaporins facilitate the transport of water and small neutral solutes across cell membranes. The polypeptide is Probable aquaporin PIP2-8 (PIP2-8) (Oryza sativa subsp. japonica (Rice)).